Here is a 221-residue protein sequence, read N- to C-terminus: Putative adhesin P1-like protein MPN_131 (221 aa).

Residues 13–36 (RYGNNHRGSNSSTSGVTTQGQSQN) are compositionally biased toward low complexity. 2 disordered regions span residues 13-51 (RYGN…NVGV) and 90-183 (GWRN…TPSG). A compositionally biased stretch (polar residues) spans 37 to 48 (ASSNEPAPTFSN). The segment covering 130 to 139 (LKQDKADKSG) has biased composition (basic and acidic residues). Composition is skewed to polar residues over residues 149 to 160 (SGDNLTNYTNLP) and 174 to 183 (HSPTRTTPSG).

This sequence belongs to the adhesin P1 family.

The polypeptide is Putative adhesin P1-like protein MPN_131 (Mycoplasma pneumoniae (strain ATCC 29342 / M129 / Subtype 1) (Mycoplasmoides pneumoniae)).